The chain runs to 539 residues: MQGAIARVCMVVVAAILNHPLLFPNENTTVPEQDEDLLARMKEHQEKLEAEQKRLEQEISQNETSVIGDQDGYGWYFWSALCLVIFFTIEVCRQDLISAEIPDPAEDEDGDCSTGYHSAKSIALDRGTLNNFCKTRFFPYTNESGRVREFIEGFADDLLEALRSICDLKADLEVEDFAGIGSMFESWRVSKPPTCDLIVPFSPPQPLRFQFELWCDPSTEIPLDLQGCGRIQLIKPGGNGTDCLCGSIDLGDDMLCLLHNRNECEVLEDDALPELLCARDTTYLSKGQIMRWFQISVSKAWGKISHKYDFELAFRNLDFPGALKIKFPSGKTVVLNLTPAVQFENTDAYLISHFPSDTSNSSDTHWQLSLSVYEKNLLKHLAKSLPTNSCHIHCLQIVAFLHKKQTTLTGRSAFCNYHIKTALLHLLLSKRPAMWQPQNLDSRLRDLLSFLQQSLEEKKLYHALVGNPRIPVEILVPKIIRTAEPINLYRPLVLQRHVYAKMEEHFEEMVRNTSVLVQEYTPHFSNGHVRHEFSSAEQI.

The first 24 residues, 1 to 24 (MQGAIARVCMVVVAAILNHPLLFP), serve as a signal peptide directing secretion. Over 25–71 (NENTTVPEQDEDLLARMKEHQEKLEAEQKRLEQEISQNETSVIGDQD) the chain is Extracellular. 2 N-linked (GlcNAc...) asparagine glycosylation sites follow: Asn27 and Asn62. A coiled-coil region spans residues 32–68 (EQDEDLLARMKEHQEKLEAEQKRLEQEISQNETSVIG). The chain crosses the membrane as a helical span at residues 72–92 (GYGWYFWSALCLVIFFTIEVC). Over 93-539 (RQDLISAEIP…RHEFSSAEQI (447 aa)) the chain is Cytoplasmic.

It belongs to the ITPRIP family.

Its subcellular location is the cell membrane. The protein resides in the nucleus outer membrane. Functionally, enhances Ca(2+)-mediated inhibition of inositol 1,4,5-triphosphate receptor (ITPR) Ca(2+) release. The protein is Inositol 1,4,5-trisphosphate receptor-interacting protein (itprip) of Danio rerio (Zebrafish).